Consider the following 507-residue polypeptide: Protein O-glucosyltransferase 3 (507 aa).

The first 20 residues, Met-1–Ala-20, serve as a signal peptide directing secretion. The Filamin repeat unit spans residues Glu-24–Gly-134. N-linked (GlcNAc...) asparagine glycans are attached at residues Asn-61 and Asn-306. Residues Arg-504 to Leu-507 carry the Prevents secretion from ER motif.

It belongs to the KDELC family.

The protein localises to the endoplasmic reticulum lumen. The enzyme catalyses L-seryl-[EGF-like domain protein] + UDP-alpha-D-glucose = 3-O-(beta-D-glucosyl)-L-seryl-[EGF-like domain protein] + UDP + H(+). It catalyses the reaction L-seryl-[EGF-like domain protein] + UDP-alpha-D-xylose = 3-O-(beta-D-xylosyl)-L-seryl-[EGF-like domain protein] + UDP + H(+). It functions in the pathway protein modification; protein glycosylation. Functionally, protein glucosyltransferase that catalyzes the transfer of glucose from UDP-glucose to a serine residue within the consensus sequence peptide C-X-N-T-X-G-S-F-X-C. Can also catalyze the transfer of xylose from UDP-xylose but less efficiently. Specifically targets extracellular EGF repeats of proteins such as NOTCH1, NOTCH3, FBN1, FBN2 and LTBP1. May regulate the transport of NOTCH1 and NOTCH3 to the plasma membrane and thereby the Notch signaling pathway. The polypeptide is Protein O-glucosyltransferase 3 (Homo sapiens (Human)).